The primary structure comprises 385 residues: Probable nitrate transporter NarT (385 aa).

Transmembrane regions (helical) follow at residues 14 to 34 (TLSLVVGFMAWSIISPLMPYI), 47 to 67 (IILAIPVILGSILRVPFGYLT), 69 to 89 (IIGAKWVFFCSFVILLFPIFF), 97 to 117 (GMLMLSGFFLGVGGAIFSVGV), 139 to 159 (GNIGTAVSSFLAPPIAGIIGW), 161 to 181 (TTVRSYLIIIAIFAILMFIFG), 205 to 225 (LYYLSLWYFITFGAFVAFGLF), 246 to 266 (GVFIALATFLRPIGGILGDKF), 277 to 297 (IIMIVGAVILGISSHIALFTI), 302 to 322 (ISICAGLGNGLIFKLVPSYFA), 330 to 350 (GIVSMMGGLGGFFPPLVITYV), and 359 to 379 (LAFILLAIFGVLAFITMGHLY).

Belongs to the major facilitator superfamily. Nitrate/nitrite porter (TC 2.A.1.8) family.

It is found in the cell membrane. Functionally, probably required for nitrate uptake under anoxic conditions. Also possibly involved in excretion of nitrite produced by the dissimilatory reduction of nitrate. This Staphylococcus haemolyticus (strain JCSC1435) protein is Probable nitrate transporter NarT (narT).